A 314-amino-acid chain; its full sequence is Secreted frizzled-related protein 1 (314 aa).

An N-terminal signal peptide occupies residues 1 to 31 (MGIGRSEGGRRGAALGVLLALGAALLAVGSA). Residues 53–169 (TKPPQCVDIP…FPEGDVCIAM (117 aa)) enclose the FZ domain. 5 disulfides stabilise this stretch: cysteine 58–cysteine 121, cysteine 68–cysteine 114, cysteine 105–cysteine 140, cysteine 129–cysteine 166, and cysteine 133–cysteine 157. Asparagine 173 carries an N-linked (GlcNAc...) asparagine glycan. 3 cysteine pairs are disulfide-bonded: cysteine 186-cysteine 256, cysteine 189-cysteine 258, and cysteine 203-cysteine 306. Residues 186–306 (CPPCDNELKS…FMKKMKNHEC (121 aa)) form the NTR domain.

The protein belongs to the secreted frizzled-related protein (sFRP) family. In terms of assembly, interacts with WNT1, WNT2 and FRZD6. Interacts with WNT4, WNT8 and MYOC. As to expression, widely expressed. Absent from lung, liver and peripheral blood leukocytes. Highest levels in heart and fetal kidney. Also expressed in testis, ovary, fetal brain and lung, leiomyomal cells, myometrial cells and vascular smooth muscle cells. Expressed in foreskin fibroblasts and in keratinocytes.

It is found in the secreted. Its function is as follows. Soluble frizzled-related proteins (sFRPS) function as modulators of Wnt signaling through direct interaction with Wnts. They have a role in regulating cell growth and differentiation in specific cell types. SFRP1 decreases intracellular beta-catenin levels. Has antiproliferative effects on vascular cells, in vitro and in vivo, and can induce, in vivo, an angiogenic response. In vascular cell cycle, delays the G1 phase and entry into the S phase. In kidney development, inhibits tubule formation and bud growth in metanephroi. Inhibits WNT1/WNT4-mediated TCF-dependent transcription. The protein is Secreted frizzled-related protein 1 (SFRP1) of Homo sapiens (Human).